The primary structure comprises 179 residues: Large ribosomal subunit protein uL5 (179 aa).

Belongs to the universal ribosomal protein uL5 family. In terms of assembly, part of the 50S ribosomal subunit; part of the 5S rRNA/L5/L18/L25 subcomplex. Contacts the 5S rRNA and the P site tRNA. Forms a bridge to the 30S subunit in the 70S ribosome.

Functionally, this is one of the proteins that bind and probably mediate the attachment of the 5S RNA into the large ribosomal subunit, where it forms part of the central protuberance. In the 70S ribosome it contacts protein S13 of the 30S subunit (bridge B1b), connecting the 2 subunits; this bridge is implicated in subunit movement. Contacts the P site tRNA; the 5S rRNA and some of its associated proteins might help stabilize positioning of ribosome-bound tRNAs. This Herminiimonas arsenicoxydans protein is Large ribosomal subunit protein uL5.